Consider the following 2211-residue polypeptide: Coagulation factor V (2211 aa).

The signal sequence occupies residues methionine 1–alanine 28. Plastocyanin-like domains lie at lysine 30–cysteine 193, threonine 203–lysine 327, lysine 348–cysteine 525, and isoleucine 535–alanine 686. F5/8 type A domains follow at residues lysine 30–lysine 327 and lysine 348–alanine 686. Residues aspartate 139 and aspartate 140 each contribute to the Ca(2+) site. Cysteine 167 and cysteine 193 are joined by a disulfide. Residues asparagine 225, asparagine 239, asparagine 297, asparagine 382, and asparagine 460 are each glycosylated (N-linked (GlcNAc...) asparagine). Cysteine 248 and cysteine 329 are oxidised to a cystine. Cysteines 499 and 525 form a disulfide. Asparagine 553 and asparagine 587 each carry an N-linked (GlcNAc...) asparagine glycan. Cysteines 607 and 688 form a disulfide. Threonine 644 is subject to Phosphothreonine. Residues serine 696–arginine 1564 form a b region. Residues tyrosine 697, tyrosine 701, and tyrosine 730 each carry the sulfotyrosine modification. A propeptide spans serine 742 to arginine 1564 (activation peptide (connecting region)). N-linked (GlcNAc...) asparagine glycosylation is found at asparagine 745, asparagine 756, asparagine 774, and asparagine 780. A disordered region spans residues leucine 814–histidine 844. N-linked (GlcNAc...) asparagine glycans are attached at residues asparagine 902, asparagine 952, and asparagine 964. Over residues threonine 954–tryptophan 969 the composition is skewed to polar residues. The segment at threonine 954–leucine 1039 is disordered. A compositionally biased stretch (basic and acidic residues) spans proline 995–glutamate 1009. N-linked (GlcNAc...) asparagine glycosylation is found at asparagine 1044, asparagine 1053, asparagine 1062, asparagine 1071, asparagine 1078, and asparagine 1094. Disordered regions lie at residues serine 1084–tyrosine 1162 and glutamine 1195–threonine 1471. 2 stretches are compositionally biased toward polar residues: residues threonine 1091–proline 1103 and threonine 1127–proline 1160. 30 tandem repeats follow at residues serine 1124 to serine 1137, proline 1138 to serine 1151, alanine 1188 to proline 1196, serine 1197 to methionine 1205, alanine 1206 to glutamate 1214, serine 1215 to threonine 1223, serine 1224 to glutamate 1232, serine 1233 to threonine 1241, alanine 1242 to glutamate 1250, serine 1251 to threonine 1259, alanine 1260 to glutamate 1268, serine 1269 to threonine 1277, alanine 1278 to glutamate 1286, serine 1287 to threonine 1295, serine 1296 to glutamate 1304, serine 1305 to threonine 1313, alanine 1314 to glutamate 1322, serine 1323 to threonine 1331, alanine 1332 to glutamate 1340, serine 1341 to threonine 1349, serine 1350 to glutamate 1358, serine 1359 to threonine 1367, alanine 1368 to glutamate 1376, serine 1377 to threonine 1385, serine 1386 to glutamate 1394, serine 1395 to threonine 1403, alanine 1404 to glutamate 1412, serine 1413 to threonine 1421, proline 1422 to glutamate 1430, and serine 1431 to leucine 1439. The 2 X 14 AA tandem repeats stretch occupies residues serine 1124–serine 1151. A 30 X 9 AA approximate tandem repeats of [AS]-L-S-P-D-[LP]-[GS]-Q-[TE] region spans residues alanine 1188–threonine 1453. 8 stretches are compositionally biased toward polar residues: residues glutamate 1214–leucine 1234, threonine 1241–leucine 1252, threonine 1259–leucine 1270, glutamate 1286–leucine 1306, threonine 1313–leucine 1324, threonine 1331–serine 1352, threonine 1367–serine 1388, and threonine 1403–leucine 1414. Residues proline 1422–leucine 1441 show a composition bias toward low complexity. The 2-29; truncated repeat unit spans residues aspartate 1440 to threonine 1444. Polar residues predominate over residues lysine 1442–leucine 1463. Residues serine 1445–threonine 1453 form a 2-30 repeat. Asparagine 1451 and asparagine 1490 each carry an N-linked (GlcNAc...) asparagine glycan. Tyrosine 1513, tyrosine 1529, tyrosine 1537, and tyrosine 1541 each carry sulfotyrosine. 2 N-linked (GlcNAc...) asparagine glycosylation sites follow: asparagine 1550 and asparagine 1690. 2 Plastocyanin-like domains span residues asparagine 1569–cysteine 1738 and asparagine 1748–valine 1890. Residues asparagine 1569 to valine 1890 enclose the F5/8 type A 3 domain. Cysteines 1712 and 1738 form a disulfide. Positions 1830 and 1832 each coordinate Cu cation. Residue asparagine 1839 is glycosylated (N-linked (GlcNAc...) asparagine). Residue aspartate 1872 coordinates Cu cation. 2 disulfide bridges follow: cysteine 1894–cysteine 2048 and cysteine 2053–cysteine 2208. 2 F5/8 type C domains span residues cysteine 1894–cysteine 2048 and cysteine 2053–cysteine 2208. Asparagine 1997 and asparagine 2196 each carry an N-linked (GlcNAc...) asparagine glycan.

The protein belongs to the multicopper oxidase family. In terms of assembly, factor Va, the activated form of factor V, is composed of a heavy chain and a light chain, non-covalently bound. The interaction between the two chains is calcium-dependent. Forms heterodimer with SERPINA5. Thrombin activates factor V proteolytically to the active cofactor, factor Va (formation of a heavy chain at the N-terminus and a light chain at the C-terminus). Post-translationally, sulfation is required for efficient thrombin cleavage and activation and for full procoagulant activity. In terms of processing, activated protein C inactivates factor V and factor Va by proteolytic degradation.

The protein resides in the secreted. With respect to regulation, inhibited by SERPINA5. In terms of biological role, central regulator of hemostasis. It serves as a critical cofactor for the prothrombinase activity of factor Xa that results in the activation of prothrombin to thrombin. The sequence is that of Coagulation factor V (F5) from Bos taurus (Bovine).